A 387-amino-acid chain; its full sequence is ATP phosphoribosyltransferase regulatory subunit (387 aa).

The protein belongs to the class-II aminoacyl-tRNA synthetase family. HisZ subfamily. As to quaternary structure, heteromultimer composed of HisG and HisZ subunits.

Its subcellular location is the cytoplasm. It functions in the pathway amino-acid biosynthesis; L-histidine biosynthesis; L-histidine from 5-phospho-alpha-D-ribose 1-diphosphate: step 1/9. Functionally, required for the first step of histidine biosynthesis. May allow the feedback regulation of ATP phosphoribosyltransferase activity by histidine. The polypeptide is ATP phosphoribosyltransferase regulatory subunit (Psychrobacter arcticus (strain DSM 17307 / VKM B-2377 / 273-4)).